The primary structure comprises 351 residues: Methionine import ATP-binding protein MetN (351 aa).

An ABC transporter domain is found at 2 to 247 (ITTSGLTKVY…PGSELAAALF (246 aa)). Residue 38 to 45 (GQSGAGKS) coordinates ATP.

The protein belongs to the ABC transporter superfamily. Methionine importer (TC 3.A.1.24) family. In terms of assembly, the complex is composed of two ATP-binding proteins (MetN), two transmembrane proteins (MetI) and a solute-binding protein (MetQ).

Its subcellular location is the cell membrane. The catalysed reaction is L-methionine(out) + ATP + H2O = L-methionine(in) + ADP + phosphate + H(+). The enzyme catalyses D-methionine(out) + ATP + H2O = D-methionine(in) + ADP + phosphate + H(+). Its function is as follows. Part of the ABC transporter complex MetNIQ involved in methionine import. Responsible for energy coupling to the transport system. The polypeptide is Methionine import ATP-binding protein MetN (Streptomyces coelicolor (strain ATCC BAA-471 / A3(2) / M145)).